The sequence spans 70 residues: Conotoxin TxMMSK-02 (70 aa).

Positions 1–20 (MMSKLGALLTICLLLFSLTA) are cleaved as a signal peptide. A propeptide spanning residues 21 to 53 (VPLDGDQHADQPAQRLQDRIPTEDHPLFDPNKR) is cleaved from the precursor. 3 cysteine pairs are disulfide-bonded: cysteine 54–cysteine 68, cysteine 55–cysteine 64, and cysteine 60–cysteine 67. Proline 66 carries the 4-hydroxyproline modification. At tyrosine 69 the chain carries Tyrosine amide.

This sequence belongs to the conotoxin M superfamily. As to expression, expressed by the venom duct.

The protein resides in the secreted. The protein is Conotoxin TxMMSK-02 of Conus textile (Cloth-of-gold cone).